A 468-amino-acid polypeptide reads, in one-letter code: MSSHKPVRPNEALHKEALEELDAKINEAKKRFNEHKEKLGAIRGGGSLQEKNAELRAELDNIRNAQAAIRSSKQTLINKVKAQDELLKKKVKELTAMKKTVPFKSEVELDKHVKQLQAAVDSGTLKIVDEKKYLREISQCNRTRKSFVELNALQTSIDTIRNELNELRDQLNDSESKKLSDKFVEIRSELDEVRKQQDGYYKDQRKLIAERDDEKTALDDLYNQRRALQREYDTQLRAFRTYEREQRAKRQEQFRLERENREKEKRRIAAQRKLEEASIPAFTEEILACENLLKVFHVPVESSTTNAVSTGNTSSKILKPRTLTPRTVDPIPEGTIIKKESSDDAMFSGLKKSKPKKSNKSNNNQADSDRLNLSFGTIKEFDFVGVPAPFTKSQVDSAVEQLKSRIAHFKEQQDSVTKQRIEKAKQEIEKLEAKYNSKEEKTLTEADMVISSEETVTVTNDLEVEATA.

Coiled-coil stretches lie at residues 10-94 (NEAL…VKEL) and 147-279 (FVEL…EASI). The segment at 324 to 369 (TPRTVDPIPEGTIIKKESSDDAMFSGLKKSKPKKSNKSNNNQADSD) is disordered. S342 carries the phosphoserine modification. A coiled-coil region spans residues 399–445 (VEQLKSRIAHFKEQQDSVTKQRIEKAKQEIEKLEAKYNSKEEKTLTE).

Its subcellular location is the cytoplasm. This is an uncharacterized protein from Schizosaccharomyces pombe (strain 972 / ATCC 24843) (Fission yeast).